Reading from the N-terminus, the 341-residue chain is GTPase Obg (341 aa).

The Obg domain occupies 1-159; it reads MKFLDQAKIY…RTIWLRLKLI (159 aa). The OBG-type G domain maps to 160 to 327; that stretch reads ADAGLVGLPN…TLRQLARIID (168 aa). GTP contacts are provided by residues 166 to 173, 191 to 195, 212 to 215, 279 to 282, and 308 to 310; these read GLPNAGKS, FTTLH, DIPG, SQVD, and SAV. Mg(2+) contacts are provided by S173 and T193.

Belongs to the TRAFAC class OBG-HflX-like GTPase superfamily. OBG GTPase family. In terms of assembly, monomer. Mg(2+) is required as a cofactor.

It localises to the cytoplasm. Its function is as follows. An essential GTPase which binds GTP, GDP and possibly (p)ppGpp with moderate affinity, with high nucleotide exchange rates and a fairly low GTP hydrolysis rate. Plays a role in control of the cell cycle, stress response, ribosome biogenesis and in those bacteria that undergo differentiation, in morphogenesis control. The protein is GTPase Obg of Brucella abortus biovar 1 (strain 9-941).